A 316-amino-acid polypeptide reads, in one-letter code: Transaldolase (316 aa).

Residue Lys-132 is the Schiff-base intermediate with substrate of the active site.

It belongs to the transaldolase family. Type 1 subfamily. As to quaternary structure, homodimer.

Its subcellular location is the cytoplasm. It carries out the reaction D-sedoheptulose 7-phosphate + D-glyceraldehyde 3-phosphate = D-erythrose 4-phosphate + beta-D-fructose 6-phosphate. It functions in the pathway carbohydrate degradation; pentose phosphate pathway; D-glyceraldehyde 3-phosphate and beta-D-fructose 6-phosphate from D-ribose 5-phosphate and D-xylulose 5-phosphate (non-oxidative stage): step 2/3. In terms of biological role, transaldolase is important for the balance of metabolites in the pentose-phosphate pathway. The sequence is that of Transaldolase from Aliivibrio salmonicida (strain LFI1238) (Vibrio salmonicida (strain LFI1238)).